A 45-amino-acid chain; its full sequence is Large ribosomal subunit protein bL36 (45 aa).

The tract at residues Met-1–Arg-20 is disordered.

This sequence belongs to the bacterial ribosomal protein bL36 family.

This chain is Large ribosomal subunit protein bL36, found in Chlamydia abortus (strain DSM 27085 / S26/3) (Chlamydophila abortus).